The chain runs to 173 residues: MEVILIKPVRKLGKIGEIHKVADGFGRNYLLPQKLAIRATELNKELIVKQKHELEEKDKQIKSEITKINDLIKDQKLIFVRQTSDDGKLFGSVNNKEIAEKLSQAVSYPISHLNIILDTQIKSTGIYKVEVRLHAELSTEVTVIVARSESEIQDYLREQKTEKSTTEPLAESA.

The protein belongs to the bacterial ribosomal protein bL9 family.

Binds to the 23S rRNA. This Rickettsia bellii (strain RML369-C) protein is Large ribosomal subunit protein bL9.